Consider the following 81-residue polypeptide: Small ribosomal subunit protein bS16 (81 aa).

Belongs to the bacterial ribosomal protein bS16 family.

This chain is Small ribosomal subunit protein bS16, found in Teredinibacter turnerae (strain ATCC 39867 / T7901).